Reading from the N-terminus, the 144-residue chain is Large ribosomal subunit protein uL13 (144 aa).

This sequence belongs to the universal ribosomal protein uL13 family. As to quaternary structure, part of the 50S ribosomal subunit.

Functionally, this protein is one of the early assembly proteins of the 50S ribosomal subunit, although it is not seen to bind rRNA by itself. It is important during the early stages of 50S assembly. This is Large ribosomal subunit protein uL13 from Oleidesulfovibrio alaskensis (strain ATCC BAA-1058 / DSM 17464 / G20) (Desulfovibrio alaskensis).